Reading from the N-terminus, the 306-residue chain is Aquaporin-1 (306 aa).

Polar residues predominate over residues 1-23 (MASTHSSLTTVQNNANNKSNRTL). The tract at residues 1–24 (MASTHSSLTTVQNNANNKSNRTLN) is disordered. Over 1–59 (MASTHSSLTTVQNNANNKSNRTLNTERRLSMESSVFTLYNKAADELDTSQRSAFQACHR) the chain is Cytoplasmic. A helical transmembrane segment spans residues 60-80 (EFLAEFIGTVILVLLTCGFCA). The Extracellular segment spans residues 81–92 (EQTLHIEESKSW). The helical transmembrane segment at 93 to 113 (LTSSFGSGLSVLIGICVSGHV) threads the bilayer. At 114–145 (SGAHLNPAVTIAFCIFSGFPIRKVPSYITAQL) the chain is on the cytoplasmic side. The short motif at 119-121 (NPA) is the NPA 1 element. A helical transmembrane segment spans residues 146 to 166 (LGAFAGAALLYIIIEPAIVQF). Topologically, residues 167–192 (DGGQRYILGEKSTAGIFGTYPPLYVG) are extracellular. Residues 193 to 213 (IGSAIASEIMGTAMLLLVIMV) traverse the membrane as a helical segment. The Cytoplasmic portion of the chain corresponds to 214–226 (TGHPNNLPYKSAQ). Residues 227 to 247 (GAMIALGITTISLCIGYTSGF) form a helical membrane-spanning segment. Residues 248–278 (SLNPARDFGPRLFTAIAGWGFDVFKVYHYYA) are Extracellular-facing. The short motif at 250 to 252 (NPA) is the NPA 2 element. The helical transmembrane segment at 279-299 (LVPMFAPILGGLVGLMLMMPF) threads the bilayer. Residues 300-306 (SFLSVRA) are Cytoplasmic-facing.

Belongs to the MIP/aquaporin (TC 1.A.8) family.

The protein localises to the cell membrane. It carries out the reaction H2O(in) = H2O(out). Functionally, water channel required to facilitate the transport of water across membranes. Contributes to water uptake of spores during the early stages of spore germination. Aquaporins AQP1 and AQP2 act as extracellular pH sensors and enable the spores to hydrate under favorable conditions and to commence germination. Wounded vegetables and fruit present acidic pH, so the optimal pH range for germination is adapted to the relevant host pH. This Rhizopus delemar (strain RA 99-880 / ATCC MYA-4621 / FGSC 9543 / NRRL 43880) (Mucormycosis agent) protein is Aquaporin-1.